Reading from the N-terminus, the 340-residue chain is Probable dual-specificity RNA methyltransferase RlmN (340 aa).

Glu-90 functions as the Proton acceptor in the catalytic mechanism. The 229-residue stretch at 97–325 (QVSRKTACLS…PVTRRYQRGN (229 aa)) folds into the Radical SAM core domain. A disulfide bond links Cys-104 and Cys-331. 3 residues coordinate [4Fe-4S] cluster: Cys-111, Cys-115, and Cys-118. S-adenosyl-L-methionine contacts are provided by residues 157–158 (GE), Ser-189, 212–214 (SLT), and Asn-288. Cys-331 serves as the catalytic S-methylcysteine intermediate.

Belongs to the radical SAM superfamily. RlmN family. It depends on [4Fe-4S] cluster as a cofactor.

It localises to the cytoplasm. It carries out the reaction adenosine(2503) in 23S rRNA + 2 reduced [2Fe-2S]-[ferredoxin] + 2 S-adenosyl-L-methionine = 2-methyladenosine(2503) in 23S rRNA + 5'-deoxyadenosine + L-methionine + 2 oxidized [2Fe-2S]-[ferredoxin] + S-adenosyl-L-homocysteine. It catalyses the reaction adenosine(37) in tRNA + 2 reduced [2Fe-2S]-[ferredoxin] + 2 S-adenosyl-L-methionine = 2-methyladenosine(37) in tRNA + 5'-deoxyadenosine + L-methionine + 2 oxidized [2Fe-2S]-[ferredoxin] + S-adenosyl-L-homocysteine. Its function is as follows. Specifically methylates position 2 of adenine 2503 in 23S rRNA and position 2 of adenine 37 in tRNAs. This chain is Probable dual-specificity RNA methyltransferase RlmN, found in Treponema pallidum (strain Nichols).